We begin with the raw amino-acid sequence, 129 residues long: NADH-quinone oxidoreductase subunit K 2 (129 aa).

3 consecutive transmembrane segments (helical) span residues 3–23 (LAYP…GVLA), 28–48 (ILVL…LVAF), and 68–88 (LFTI…VLAV). The disordered stretch occupies residues 98–129 (DKLRDTAEGPEPDGPGTDGSAPTAAEKAEATA). Residues 111 to 122 (GPGTDGSAPTAA) show a composition bias toward low complexity.

The protein belongs to the complex I subunit 4L family. In terms of assembly, NDH-1 is composed of 14 different subunits. Subunits NuoA, H, J, K, L, M, N constitute the membrane sector of the complex.

It is found in the cell membrane. It carries out the reaction a quinone + NADH + 5 H(+)(in) = a quinol + NAD(+) + 4 H(+)(out). NDH-1 shuttles electrons from NADH, via FMN and iron-sulfur (Fe-S) centers, to quinones in the respiratory chain. The immediate electron acceptor for the enzyme in this species is believed to be a menaquinone. Couples the redox reaction to proton translocation (for every two electrons transferred, four hydrogen ions are translocated across the cytoplasmic membrane), and thus conserves the redox energy in a proton gradient. In Streptomyces avermitilis (strain ATCC 31267 / DSM 46492 / JCM 5070 / NBRC 14893 / NCIMB 12804 / NRRL 8165 / MA-4680), this protein is NADH-quinone oxidoreductase subunit K 2.